Reading from the N-terminus, the 306-residue chain is Recombination-associated protein RdgC (306 aa).

This sequence belongs to the RdgC family.

It localises to the cytoplasm. The protein localises to the nucleoid. May be involved in recombination. This chain is Recombination-associated protein RdgC, found in Pseudomonas syringae pv. syringae (strain B728a).